An 82-amino-acid polypeptide reads, in one-letter code: uncharacterized protein (82 aa).

Residues 29–38 (TATKSTSSGS) show a composition bias toward low complexity. The segment at 29-64 (TATKSTSSGSVPSFFTESTSTPLNQSKTNTSTLNKS) is disordered. Positions 39–50 (VPSFFTESTSTP) are enriched in polar residues. Low complexity predominate over residues 51–64 (LNQSKTNTSTLNKS).

This is an uncharacterized protein from Dictyostelium discoideum (Social amoeba).